Consider the following 656-residue polypeptide: Spermatogenesis-associated protein 13 (656 aa).

Residues 1 to 12 are compositionally biased toward polar residues; sequence MHPASVTTTSQD. The disordered stretch occupies residues 1-26; it reads MHPASVTTTSQDPCAPSGSCRGGRRR. Serine 82 bears the Phosphoserine mark. The segment at 85–115 is disordered; that stretch reads IGLDRVGRRRQMKTSNVSSDGGAESSALVDD. Residues 102-154 form an ABR (APC-binding region) domain region; sequence SSDGGAESSALVDDNGSEEDFSYEELCQANPRYLQPGGEQLAINELISDGSVV. Phosphoserine is present on serine 118. Residues 151 to 210 form the SH3 domain; it reads GSVVCAEALWDHVTMDDQELGFKAGDVIQVLEASNKDWWWGRNEDKEAWFPASFVRLRVN. The tract at residues 215-242 is disordered; that stretch reads PENCSSSHGEEQDEDTSKARHKHPESQQ. Residues 244-428 enclose the DH domain; it reads MRTNVIQEIM…KNVACLINER (185 aa). The 107-residue stretch at 459-565 folds into the PH domain; it reads ELIHSGELTK…WLQAYADERR (107 aa). Residues 565-656 form a C-terminal tail region; sequence RRVQEDQQMG…TFHKLTPFRK (92 aa).

Interacts (via ABR and SH3 domain) with APC. The binding of APC enhances its GEF activity by relieving it from an autoinhibitory conformation, in which the ABR and SH3 domains are associated with the C-terminal tail. Interacts (via C-terminal tail) with PPP1R9B (via C-terminus). Interacts with RAC1. In terms of tissue distribution, expression is aberrantly enhanced in most colorectal tumors.

It localises to the cytoplasm. It is found in the cell projection. The protein resides in the filopodium. The protein localises to the lamellipodium. Its subcellular location is the ruffle membrane. It localises to the podosome. Both the ABR and the SH3 domains contribute to maintaining the protein in an inhibited conformation by associating with the C-terminal tail. Binding of these domains to the C-terminal tail inhibits the activity of the protein by blocking a region that is required for its GEF activity. In terms of biological role, acts as a guanine nucleotide exchange factor (GEF) for RHOA, RAC1 and CDC42 GTPases. Regulates cell migration and adhesion assembly and disassembly through a RAC1, PI3K, RHOA and AKT1-dependent mechanism. Increases both RAC1 and CDC42 activity, but decreases the amount of active RHOA. Required for MMP9 up-regulation via the JNK signaling pathway in colorectal tumor cells. Involved in tumor angiogenesis and may play a role in intestinal adenoma formation and tumor progression. The polypeptide is Spermatogenesis-associated protein 13 (Spata13) (Mus musculus (Mouse)).